Here is a 247-residue protein sequence, read N- to C-terminus: 6-phosphogluconolactonase (247 aa).

The protein belongs to the glucosamine/galactosamine-6-phosphate isomerase family. 6-phosphogluconolactonase subfamily.

It catalyses the reaction 6-phospho-D-glucono-1,5-lactone + H2O = 6-phospho-D-gluconate + H(+). Its pathway is carbohydrate degradation; pentose phosphate pathway; D-ribulose 5-phosphate from D-glucose 6-phosphate (oxidative stage): step 2/3. In terms of biological role, hydrolysis of 6-phosphogluconolactone to 6-phosphogluconate. The chain is 6-phosphogluconolactonase (pgl) from Mycobacterium leprae (strain TN).